Consider the following 345-residue polypeptide: Polyprenyl transferase dpmpC (345 aa).

Helical transmembrane passes span 24–44 (PVFA…ARLA), 60–80 (GLCF…NDWV), 101–121 (VTTF…WYLL), 183–203 (LYVY…VIGW), 220–240 (CLPL…AYSY), 261–281 (HLHL…LLFL), 286–306 (SFWL…EQLI), and 319–339 (LHKS…VELL).

This sequence belongs to the UbiA prenyltransferase family. Requires Mg(2+) as cofactor.

Its subcellular location is the membrane. It functions in the pathway secondary metabolite biosynthesis; terpenoid biosynthesis. Polyprenyl transferase; part of the gene cluster that mediates the biosynthesis of diterpenoid pyrones. The first step of the pathway is the synthesis of the alpha-pyrone moiety by the polyketide synthase dpmpA via condensation of one acetyl-CoA starter unit with 3 malonyl-CoA units and 2 methylations. The alpha-pyrone is then combined with geranylgeranyl pyrophosphate (GGPP) formed by the GGPP synthase dpmpD through the action of the prenyltransferase dpmpC to yield a linear alpha-pyrone diterpenoid. Subsequent steps in the diterpenoid pyrone biosynthetic pathway involve the decalin core formation, which is initiated by the epoxidation of the C10-C11 olefin by the FAD-dependent oxidoreductase dpmpE, and is followed by a cyclization cascade catalyzed by the terpene cyclase dpmpB. The short chain dehydrogenase/reductase dpmpG then oxidizes the 8S hydroxy group to a ketone and the short chain dehydrogenase/reductase dpmpH reduces the ketone to the 8R hydroxy group to yield higginsianin B. Higginsianin B is further methylated by the methyltransferase dpmpI to produce the intermediate named FDDP B. The cytochrome P450 monooxygenase dpmpJ then oxidizes the C-26 methyl to primary alcohol, producing the final diterpenoid pyrone with a C-26 primary alcohol on the gamma-pyrone moiety named FDDP C. The protein is Polyprenyl transferase dpmpC of Macrophomina phaseolina (strain MS6) (Charcoal rot fungus).